An 8892-amino-acid polypeptide reads, in one-letter code: Nonribosomal peptide synthetase 32 (8892 aa).

Residues 12-85 (EPSKLVLGRV…QLAESIAQQN (74 aa)) enclose the Carrier 1 domain. Residue Ser46 is modified to O-(pantetheine 4'-phosphoryl)serine. The interval 88–112 (AGNGVNGHANGNGMNGNGLHNEATI) is disordered. Low complexity predominate over residues 93 to 108 (NGHANGNGMNGNGLHN). The condensation 1 stretch occupies residues 567-956 (PTSANVPRRV…EGVDLSVRDF (390 aa)). Residues 989 to 1386 (KMAEQPEALA…GRIDSQIKIR (398 aa)) are adenylation 1. Residues 1523 to 1599 (ISATAVEREL…ELAAEVQATQ (77 aa)) enclose the Carrier 2 domain. O-(pantetheine 4'-phosphoryl)serine is present on Ser1560. An epimerization 1 region spans residues 1609–2039 (GAIALSPIQQ…YGQTVKSLVN (431 aa)). Positions 2083–2518 (EDILPCSPIQ…LLLPAEEAKL (436 aa)) are condensation 2. The tract at residues 2543–2934 (SQPEALAVSA…GRRDTQVKIR (392 aa)) is adenylation 2. The Carrier 3 domain occupies 3061–3137 (SSATPIEREL…ELAANSQTGR (77 aa)). Ser3098 is subject to O-(pantetheine 4'-phosphoryl)serine. Residues 3153-3590 (LSPIQQMFFD…GDTVKTLVEE (438 aa)) are epimerization 2. Residues 3634–4061 (EDILPCSAIQ…NVDRPLRELT (428 aa)) are condensation 3. Positions 4098–4488 (TLPEALAISS…GRIDSQIKIR (391 aa)) are adenylation 3. The region spanning 4627 to 4703 (APTTDLERKL…DLSRVVEEKC (77 aa)) is the Carrier 4 domain. Ser4664 is subject to O-(pantetheine 4'-phosphoryl)serine. The segment at 4760 to 5181 (EDVYPCSPMQ…LLTDEDCDQL (422 aa)) is condensation 4. Positions 5205–5605 (TSYPTAPAIS…GRRDTQVKIR (401 aa)) are adenylation 4. One can recognise a Carrier 5 domain in the interval 5745-5821 (MPTTPMEQKL…DLAEAMEEKG (77 aa)). Ser5782 is subject to O-(pantetheine 4'-phosphoryl)serine. A condensation 5 region spans residues 5868-6285 (EDVYPCSPLQ…LLSPGQMAQI (418 aa)). The segment at 6307-6700 (QMTTRPAATA…GRIDTQIKIR (394 aa)) is adenylation 5. The Carrier 6 domain maps to 6834–6911 (ELTTTIERQL…ELATQTQTTE (78 aa)). An O-(pantetheine 4'-phosphoryl)serine modification is found at Ser6872. The segment at 6923-7360 (NFQLSPIQQM…SYSCAIESLV (438 aa)) is epimerization 3. Residues 7403-7834 (VQDILPCSPI…LLPAGDANQI (432 aa)) are condensation 6. Positions 7855–8253 (QQMAAHPTAQ…LDRIGTQVKI (399 aa)) are adenylation 6. Residues 8380–8456 (APVGRNEEIL…AMAARVTADI (77 aa)) form the Carrier 7 domain. At Ser8417 the chain carries O-(pantetheine 4'-phosphoryl)serine. The interval 8490-8878 (HFAFDATGPC…EIIEDSGCNV (389 aa)) is condensation 7.

The protein belongs to the NRP synthetase family.

The protein operates within secondary metabolite biosynthesis. Its function is as follows. Nonribosomal peptide synthetase; part of the gene cluster that mediates the biosynthesis of the lipopeptides W493 A and B. W493 A and B consist of six amino acid residues D-allo-thr, L-Ala, D-Ala, L-Gln, D-Tyr, and L-Val/L-Ile linked to a 3-hydroxy-4-methyltetradecanoic acid polyketide chain. The biosynthesis starts with formation of the linear polyketide chain by the highly reducing polyketide synthase PKS40. The gene cluster contains a putative acyl-CoA ligase (FPSE_09184) for formation of a CoA thioester polyketide. The thiol bond could be hydrolyzed by the putative thioesterase (FPSE_09186) and then accepted by the first T domain in module 1 of NRPS32. The second T domain is responsible for accepting a threonine, which is adenylated by the A domain and epimerized to the D-allo-threonine formed by the E domain. The five successive modules incorporate Ala, Ala, Gln, Tyr, and Val/Ile into the final product, which is released by cyclization. The protein is Nonribosomal peptide synthetase 32 of Fusarium pseudograminearum (strain CS3096) (Wheat and barley crown-rot fungus).